Reading from the N-terminus, the 155-residue chain is Interleukin-2 (155 aa).

The signal sequence occupies residues 1–20; the sequence is MYKMQLLSCIALTLVLVANS. T24 carries an O-linked (GalNAc...) threonine glycan. C79 and C127 form a disulfide bridge. Residue N112 is glycosylated (N-linked (GlcNAc...) asparagine).

This sequence belongs to the IL-2 family.

It is found in the secreted. Cytokine produced by activated CD4-positive helper T-cells and to a lesser extend activated CD8-positive T-cells and natural killer (NK) cells that plays pivotal roles in the immune response and tolerance. Binds to a receptor complex composed of either the high-affinity trimeric IL-2R (IL2RA/CD25, IL2RB/CD122 and IL2RG/CD132) or the low-affinity dimeric IL-2R (IL2RB and IL2RG). Interaction with the receptor leads to oligomerization and conformation changes in the IL-2R subunits resulting in downstream signaling starting with phosphorylation of JAK1 and JAK3. In turn, JAK1 and JAK3 phosphorylate the receptor to form a docking site leading to the phosphorylation of several substrates including STAT5. This process leads to activation of several pathways including STAT, phosphoinositide-3-kinase/PI3K and mitogen-activated protein kinase/MAPK pathways. Functions as a T-cell growth factor and can increase NK-cell cytolytic activity as well. Promotes strong proliferation of activated B-cells and subsequently immunoglobulin production. Plays a pivotal role in regulating the adaptive immune system by controlling the survival and proliferation of regulatory T-cells, which are required for the maintenance of immune tolerance. Moreover, participates in the differentiation and homeostasis of effector T-cell subsets, including Th1, Th2, Th17 as well as memory CD8-positive T-cells. The chain is Interleukin-2 (IL2) from Canis lupus familiaris (Dog).